A 445-amino-acid chain; its full sequence is Sporulation-specific glucan 1,3-beta-glucosidase (445 aa).

The first 21 residues, 1-21 (MVSFRGLTTLTLLFTKLVNCN), serve as a signal peptide directing secretion. An N-linked (GlcNAc...) asparagine glycan is attached at Asn-201. Catalysis depends on Glu-233, which acts as the Proton donor. Glu-335 (nucleophile) is an active-site residue.

This sequence belongs to the glycosyl hydrolase 5 (cellulase A) family.

The protein resides in the secreted. It carries out the reaction Successive hydrolysis of beta-D-glucose units from the non-reducing ends of (1-&gt;3)-beta-D-glucans, releasing alpha-glucose.. In terms of biological role, probably involved in the processes of spore formation and contributes to ascospore thermoresistance by participating in the morphogenesis of ascospore walls. The enzyme may do this by modifying glucan linkages in the developing ascospore wall, thus strengthening it or lending it plasticity. This chain is Sporulation-specific glucan 1,3-beta-glucosidase (SPR1), found in Saccharomyces cerevisiae (strain ATCC 204508 / S288c) (Baker's yeast).